Reading from the N-terminus, the 253-residue chain is tRNA-cytidine(32) 2-sulfurtransferase 2 (253 aa).

Positions serine 33 to serine 38 match the PP-loop motif motif. 3 residues coordinate [4Fe-4S] cluster: cysteine 108, cysteine 111, and cysteine 199.

It belongs to the TtcA family. In terms of assembly, homodimer. The cofactor is Mg(2+). [4Fe-4S] cluster serves as cofactor.

It is found in the cytoplasm. It carries out the reaction cytidine(32) in tRNA + S-sulfanyl-L-cysteinyl-[cysteine desulfurase] + AH2 + ATP = 2-thiocytidine(32) in tRNA + L-cysteinyl-[cysteine desulfurase] + A + AMP + diphosphate + H(+). Its pathway is tRNA modification. In terms of biological role, catalyzes the ATP-dependent 2-thiolation of cytidine in position 32 of tRNA, to form 2-thiocytidine (s(2)C32). The sulfur atoms are provided by the cysteine/cysteine desulfurase (IscS) system. The polypeptide is tRNA-cytidine(32) 2-sulfurtransferase 2 (Francisella tularensis subsp. novicida (strain U112)).